The sequence spans 101 residues: Pro-corazonin (101 aa).

A signal peptide spans 1–16 (MLVLFVLSLVVSCALC). An Asparagine amide modification is found at N27. A propeptide spanning residues 31-101 (SNFPAEISAL…REKAPNNDNY (71 aa)) is cleaved from the precursor.

Belongs to the corazonin family. As to expression, expressed in central brain and the retrocerebral complex but not in antennal lobes, optic lobes or in gnathal, thoracic and abdominal ganglia (at protein level).

Its subcellular location is the secreted. In terms of biological role, cardioactive peptide. Corazonin is probably involved in the physiological regulation of the heart beat. This Camponotus floridanus (Florida carpenter ant) protein is Pro-corazonin.